The chain runs to 299 residues: Probable lipid kinase YegS (299 aa).

The 132-residue stretch at 2-133 folds into the DAGKc domain; it reads ANFPASLLIL…IDMAMVNDKT (132 aa). Residues T40, 66 to 72, and T95 contribute to the ATP site; that span reads GDGTINE. Residues L215, D218, and L220 each coordinate Mg(2+). The Proton acceptor role is filled by E271.

This sequence belongs to the diacylglycerol/lipid kinase family. YegS lipid kinase subfamily. Mg(2+) is required as a cofactor. Ca(2+) serves as cofactor.

Its subcellular location is the cytoplasm. Probably phosphorylates lipids; the in vivo substrate is unknown. In Salmonella choleraesuis (strain SC-B67), this protein is Probable lipid kinase YegS.